Consider the following 71-residue polypeptide: Conotoxin PnMEKL-032 (71 aa).

A signal peptide spans M1 to A19. Residues L20–R46 constitute a propeptide that is removed on maturation. 3 cysteine pairs are disulfide-bonded: C48/C62, C55/C66, and C61/C70.

This sequence belongs to the conotoxin O2 superfamily. Expressed by the venom duct.

Its subcellular location is the secreted. The polypeptide is Conotoxin PnMEKL-032 (Conus pennaceus (Feathered cone)).